The following is a 155-amino-acid chain: Small ribosomal subunit protein uS7 (155 aa).

It belongs to the universal ribosomal protein uS7 family. In terms of assembly, part of the 30S ribosomal subunit. Contacts proteins S9 and S11.

In terms of biological role, one of the primary rRNA binding proteins, it binds directly to 16S rRNA where it nucleates assembly of the head domain of the 30S subunit. Is located at the subunit interface close to the decoding center, probably blocks exit of the E-site tRNA. This Lactococcus lactis subsp. lactis (strain IL1403) (Streptococcus lactis) protein is Small ribosomal subunit protein uS7.